The primary structure comprises 323 residues: Acetyl esterase (323 aa).

Positions 91–93 match the Involved in the stabilization of the negatively charged intermediate by the formation of the oxyanion hole motif; sequence HGG. Catalysis depends on residues serine 165, aspartate 262, and histidine 292.

Belongs to the 'GDXG' lipolytic enzyme family. As to quaternary structure, homodimer. Interacts with MalT and MelA.

Its subcellular location is the cytoplasm. Its function is as follows. Displays esterase activity towards short chain fatty esters (acyl chain length of up to 8 carbons). Able to hydrolyze triacetylglycerol (triacetin) and tributyrylglycerol (tributyrin), but not trioleylglycerol (triolein) or cholesterol oleate. Negatively regulates MalT activity by antagonizing maltotriose binding. Inhibits MelA galactosidase activity. This Salmonella typhi protein is Acetyl esterase.